A 224-amino-acid chain; its full sequence is Retinoschisin (224 aa).

Residues 1-23 (MSRKIEGFLLLLLFGYEATLGLS) form the signal peptide. An F5/8 type C domain is found at 63–219 (CPYHKPLGFE…IAIRMELLEC (157 aa)). Intrachain disulfides connect Cys-63–Cys-219 and Cys-110–Cys-142.

As to quaternary structure, homooctamer of 4 homodimers; disulfide-linked. The homooctamer has a flat, cogwheel structure with a diameter of about 14 nm. Two stacked octamers can assemble to form a hexadecamer. As to expression, restricted to the retina (at protein level). Detected in the inner segment of the photoreceptors, the inner nuclear layer, the inner plexiform layer and the ganglion cell layer (at protein level). At the macula, expressed in both the outer and inner nuclear layers and in the inner plexiform layer (at protein level). Detected in retina. Detected only within the photoreceptor cell layer, most prominently within the inner segments of the photoreceptors. Undetectable in the inner plexiform layers and the inner nuclear layer.

It is found in the secreted. The protein localises to the cell membrane. In terms of biological role, binds negatively charged membrane lipids, such as phosphatidylserine and phosphoinositides. May play a role in cell-cell adhesion processes in the retina, via homomeric interaction between octamers present on the surface of two neighboring cells. Required for normal structure and function of the retina. This chain is Retinoschisin (RS1), found in Homo sapiens (Human).